The following is a 244-amino-acid chain: Inactive chemokine-binding protein (244 aa).

The disordered stretch occupies residues 1–79 (MHVPASLQQS…STSVEDVDPP (79 aa)). The span at 37 to 53 (QDQTPTNDKICQSVTEI) shows a compositional bias: polar residues. Residues 54–77 (TESESDPDPEVESEDDSTSVEDVD) are compositionally biased toward acidic residues.

Belongs to the orthopoxvirus OPG001 family.

Its subcellular location is the host cytoplasm. Functionally, the protein is truncated in this vaccinal strain and presumably inactive, because the lack of signal peptide prevents the protein of being secreted. In the wild-type viruses inhibits host immune defense by binding to host chemokines. Binds host CC chemokines (beta chemokines) such as RANTES with high affinity, but not CXC or C chemokines (alpha and gamma chemokines). The sequence is that of Inactive chemokine-binding protein (OPG001) from Vaccinia virus (strain Western Reserve) (VACV).